A 290-amino-acid chain; its full sequence is Acetyl-coenzyme A carboxylase carboxyl transferase subunit beta (290 aa).

Positions 29–290 constitute a CoA carboxyltransferase N-terminal domain; that stretch reads LWGKCPECSQ…RLHGYREKRK (262 aa). 4 residues coordinate Zn(2+): Cys-33, Cys-36, Cys-52, and Cys-55. A C4-type zinc finger spans residues 33 to 55; sequence CPECSQVVYRKDLLENANVCSNC.

This sequence belongs to the AccD/PCCB family. In terms of assembly, acetyl-CoA carboxylase is a heterohexamer composed of biotin carboxyl carrier protein (AccB), biotin carboxylase (AccC) and two subunits each of ACCase subunit alpha (AccA) and ACCase subunit beta (AccD). The cofactor is Zn(2+).

Its subcellular location is the cytoplasm. The enzyme catalyses N(6)-carboxybiotinyl-L-lysyl-[protein] + acetyl-CoA = N(6)-biotinyl-L-lysyl-[protein] + malonyl-CoA. The protein operates within lipid metabolism; malonyl-CoA biosynthesis; malonyl-CoA from acetyl-CoA: step 1/1. In terms of biological role, component of the acetyl coenzyme A carboxylase (ACC) complex. Biotin carboxylase (BC) catalyzes the carboxylation of biotin on its carrier protein (BCCP) and then the CO(2) group is transferred by the transcarboxylase to acetyl-CoA to form malonyl-CoA. This chain is Acetyl-coenzyme A carboxylase carboxyl transferase subunit beta, found in Prochlorococcus marinus (strain MIT 9211).